Consider the following 28-residue polypeptide: Dermaseptin-H2 (28 aa).

Belongs to the frog skin active peptide (FSAP) family. Dermaseptin subfamily. Expressed by the skin glands.

The protein localises to the secreted. Functionally, possesses a potent antimicrobial activity against Gram-positive and Gram-negative bacteria. Probably acts by disturbing membrane functions with its amphipathic structure. The protein is Dermaseptin-H2 of Pithecopus azureus (Orange-legged monkey tree frog).